A 378-amino-acid chain; its full sequence is Putative F-box protein At4g17565 (378 aa).

The 48-residue stretch at 16–63 (PKWSELCPDLLRSIFEQLSFTNLNRAKLVCRSWNSASRGCVPKRNQIP) folds into the F-box domain.

In Arabidopsis thaliana (Mouse-ear cress), this protein is Putative F-box protein At4g17565.